A 444-amino-acid polypeptide reads, in one-letter code: Cobyrinate a,c-diamide synthase (444 aa).

In terms of domain architecture, GATase cobBQ-type spans 250–438 (IIAIAQDRAF…PHIHFFGSYK (189 aa)). Residue Cys-332 is the Nucleophile of the active site.

It belongs to the CobB/CbiA family. Mg(2+) is required as a cofactor.

The catalysed reaction is cob(II)yrinate + 2 L-glutamine + 2 ATP + 2 H2O = cob(II)yrinate a,c diamide + 2 L-glutamate + 2 ADP + 2 phosphate + 2 H(+). It functions in the pathway cofactor biosynthesis; adenosylcobalamin biosynthesis; cob(II)yrinate a,c-diamide from sirohydrochlorin (anaerobic route): step 10/10. Catalyzes the ATP-dependent amidation of the two carboxylate groups at positions a and c of cobyrinate, using either L-glutamine or ammonia as the nitrogen source. The chain is Cobyrinate a,c-diamide synthase from Fusobacterium nucleatum subsp. nucleatum (strain ATCC 25586 / DSM 15643 / BCRC 10681 / CIP 101130 / JCM 8532 / KCTC 2640 / LMG 13131 / VPI 4355).